A 671-amino-acid polypeptide reads, in one-letter code: Solute carrier family 53 member 1 (671 aa).

The tract at residues Met1–Glu193 is important for promoting lysosomal/autophagosomal degradation of PXo bodies following inorganic phosphate (Pi) starvation. Residues Met1 to Lys228 are Cytoplasmic-facing. The SPX domain maps to Lys2–Gly218. The segment at Lys152–Lys159 is important for inositol polyphosphate binding. A helical membrane pass occupies residues Val229–Gly253. At Glu254–Asn255 the chain is on the extracellular side. The chain crosses the membrane as a helical span at residues Trp256–Gly287. Residues Val288–Asn300 are Cytoplasmic-facing. Residues His301 to Cys328 form a helical membrane-spanning segment. At Asp329 to Pro334 the chain is on the extracellular side. A helical membrane pass occupies residues Gln335–Thr356. Residues Phe357–Met374 constitute an intramembrane region (helical). Residues Ala375–Phe379 are Cytoplasmic-facing. The chain crosses the membrane as a discontinuously helical span at residues Val380–Thr413. Phosphate contacts are provided by Asp389 and Asn392. The Extracellular segment spans residues Trp414 to His415. Residues Lys416–Lys455 form a discontinuously helical membrane-spanning segment. In terms of domain architecture, EXS spans His423–Arg627. Residue Glu456 is a topological domain, cytoplasmic. A helical membrane pass occupies residues Ser457 to Pro488. 2 residues coordinate phosphate: Lys466 and Tyr467. Residues Leu489 to Lys491 are Extracellular-facing. Residues Glu492–Trp519 traverse the membrane as a helical segment. Residues Gly520–Tyr538 are Cytoplasmic-facing. The chain crosses the membrane as a discontinuously helical span at residues Ser539–Ile570. Phosphate-binding residues include Arg555, Arg586, and Arg587. The chain crosses the membrane as a helical span at residues Glu571–Val609. Topologically, residues Arg610–Ser671 are cytoplasmic.

It belongs to the SYG1 (TC 2.A.94) family. In terms of assembly, homodimer. Interacts with the FAR/SIN/STRIPAK complex members Cka and Pp2A-29B. Detected in PXo bodies found in the enterocytes and progenitors of the midgut and in the hindgut, but rarely occur in the Malpighian tubules, crop, brain, muscles and germlines (at protein level).

It is found in the membrane. The enzyme catalyses phosphate(in) = phosphate(out). Its function is as follows. Inorganic ion transporter that mediates phosphate ion export across the cell membrane. Plays a major role in phosphate homeostasis, preventing intracellular phosphate accumulation and possible calcium phosphate precipitation, ultimately preserving calcium signaling. Binds inositol hexakisphosphate (Ins6P) and similar inositol polyphosphates, such as 5-diphospho-inositol pentakisphosphate (5-InsP7), which are important intracellular signaling molecules involved in regulation of phosphate flux. In enterocytes and differentiating progenitors of the gut, promotes the biogenesis and maintenance of organelles called PXo bodies that store intracellular inorganic phosphate (Pi), and also regulates Cka-JNK mediated tissue homeostasis in response to Pi availability in these tissues. Under conditions of adequate Pi, transports Pi into PXo bodies which convert and store the Pi in the form of phospholipids. It also inhibits Cka at the post-transcriptional level to prevent Cka-bsk/JNK mediated cell proliferation. Upon Pi starvation, Pxo expression is down-regulated resulting in the PXo bodies decreasing in phospholipid content until they undergo lysosomal/autophagosomal degradation and release the stored Pi back into the cytosol for use by the cell. Decrease in Pxo expression also activates the Cka protein, which moves to the nucleus to activate bsk/JNK which then induces nearby progenitor cells to proliferate and form new absorptive cells, probably helping the organism to cope with the nutrient deficiency by maximizing absorption of dietary Pi. In Drosophila melanogaster (Fruit fly), this protein is Solute carrier family 53 member 1.